A 22-amino-acid chain; its full sequence is Phospholipase A2 (22 aa).

The protein belongs to the phospholipase A2 family. Group II subfamily. It depends on Ca(2+) as a cofactor. Seven disulfide bonds are present. In terms of tissue distribution, expressed by the venom gland.

The protein resides in the secreted. The catalysed reaction is a 1,2-diacyl-sn-glycero-3-phosphocholine + H2O = a 1-acyl-sn-glycero-3-phosphocholine + a fatty acid + H(+). Snake venom phospholipase A2 (PLA2) that inhibits neuromuscular transmission by blocking acetylcholine release from the nerve termini. PLA2 catalyzes the calcium-dependent hydrolysis of the 2-acyl groups in 3-sn-phosphoglycerides. In Daboia siamensis (Eastern Russel's viper), this protein is Phospholipase A2.